The sequence spans 240 residues: 5-oxoprolinase subunit B (240 aa).

194–201 (GWQLIGKT) provides a ligand contact to ATP.

The protein belongs to the PxpB family. In terms of assembly, forms a complex composed of PxpA, PxpB and PxpC. Interacts with PxpC (KipA). Interaction with PxpC prevents the inhibitory action of PxpB (KipI). Interacts with KinA. Two PxpB monomers bind via their C-domains at a conserved proline in the KinA dimerization and histidine-phosphotransfer (DHp) domain.

It catalyses the reaction 5-oxo-L-proline + ATP + 2 H2O = L-glutamate + ADP + phosphate + H(+). Catalyzes the cleavage of 5-oxoproline to form L-glutamate coupled to the hydrolysis of ATP to ADP and inorganic phosphate. In addition, is a potent inhibitor of the autophosphorylation reaction of kinase A (kinA) and its reverse reaction, but does not inhibit phosphate transfer to the Spo0F response regulator once kinase A is phosphorylated. Is an inhibitor of the catalytic domain of kinase A affecting the ATP/ADP reactions and not the phosphotransferase functions of this domain. The inhibition is non-competitive with respect to ATP. This chain is 5-oxoprolinase subunit B, found in Bacillus subtilis (strain 168).